The primary structure comprises 311 residues: tRNA-cytidine(32) 2-sulfurtransferase (311 aa).

The short motif at 47 to 52 is the PP-loop motif element; the sequence is SGGKDS. The [4Fe-4S] cluster site is built by cysteine 122, cysteine 125, and cysteine 213.

It belongs to the TtcA family. In terms of assembly, homodimer. Mg(2+) serves as cofactor. Requires [4Fe-4S] cluster as cofactor.

It is found in the cytoplasm. The enzyme catalyses cytidine(32) in tRNA + S-sulfanyl-L-cysteinyl-[cysteine desulfurase] + AH2 + ATP = 2-thiocytidine(32) in tRNA + L-cysteinyl-[cysteine desulfurase] + A + AMP + diphosphate + H(+). The protein operates within tRNA modification. Its function is as follows. Catalyzes the ATP-dependent 2-thiolation of cytidine in position 32 of tRNA, to form 2-thiocytidine (s(2)C32). The sulfur atoms are provided by the cysteine/cysteine desulfurase (IscS) system. This is tRNA-cytidine(32) 2-sulfurtransferase from Escherichia coli O127:H6 (strain E2348/69 / EPEC).